The primary structure comprises 275 residues: Large ribosomal subunit protein uL2c (275 aa).

Residues 225-256 (AMNAVDHPHGGGEGRSPIGRSQPSTPWGRPAL) form a disordered region.

It belongs to the universal ribosomal protein uL2 family. In terms of assembly, part of the 50S ribosomal subunit.

The protein localises to the plastid. Its subcellular location is the chloroplast. The sequence is that of Large ribosomal subunit protein uL2c (rpl2) from Cyanidium caldarium (Red alga).